Here is a 267-residue protein sequence, read N- to C-terminus: Tetrahydromethanopterin S-methyltransferase subunit C (267 aa).

The next 7 membrane-spanning stretches (helical) occupy residues Ile19–Pro39, Ile75–Gly95, Ala97–Ala117, Thr140–Val160, Tyr162–His182, Leu198–Leu218, and Gly221–Ser241.

This sequence belongs to the MtrC family. In terms of assembly, the complex is composed of 8 subunits; MtrA, MtrB, MtrC, MtrD, MtrE, MtrF, MtrG and MtrH.

Its subcellular location is the cell membrane. The enzyme catalyses 5-methyl-5,6,7,8-tetrahydromethanopterin + coenzyme M + 2 Na(+)(in) = 5,6,7,8-tetrahydromethanopterin + methyl-coenzyme M + 2 Na(+)(out). Its pathway is one-carbon metabolism; methanogenesis from CO(2); methyl-coenzyme M from 5,10-methylene-5,6,7,8-tetrahydromethanopterin: step 2/2. In terms of biological role, part of a complex that catalyzes the formation of methyl-coenzyme M and tetrahydromethanopterin from coenzyme M and methyl-tetrahydromethanopterin. This is an energy-conserving, sodium-ion translocating step. The chain is Tetrahydromethanopterin S-methyltransferase subunit C from Methanosarcina barkeri (strain Fusaro / DSM 804).